The chain runs to 132 residues: MATRHQVRQSVISLLYAFELNSQNNVFVDEILDEKKIRNEQKNFTLNLYNGILDNLNNIDETLNSFLNDNQITALGHVERAILRLGAYELLFTDTPSAIVINEAIELAKELANDNSPKFINGVLDALIKAKK.

The protein belongs to the NusB family.

In terms of biological role, involved in transcription antitermination. Required for transcription of ribosomal RNA (rRNA) genes. Binds specifically to the boxA antiterminator sequence of the ribosomal RNA (rrn) operons. This Campylobacter jejuni subsp. jejuni serotype O:2 (strain ATCC 700819 / NCTC 11168) protein is Transcription antitermination protein NusB.